The following is a 456-amino-acid chain: MDGDLAIGKMASSTSPMGPIDSLELLDLLFDRQDGVLRHVELGEDWGHGEDQVLPGADSDDFLNSILGSGDSDSPTWSPAASDSGISEDLPSDTQDTPPHGGVPATPAGCHSVESGKGPCPSYHPGPTCPARHLGPVAPRLETSVAIDLEMWSPGVYAEEQTDLADSPSRYNLTVKDLLLSSSSGDLQQHHLAAPHLLRPGTGHCQELVLTEDEKKLLAKEGITLPTQLPLTKYEERMLKKIRRKIRNKQSAQESRKKKKEYIDGLETRMSACTAQNQELQRKVLHLEKQNLSLLEQLKKLQAIVVQSTSKSAQTGTCIAVLLFSFALIVLPSISPFASNRAESPGDFAPVRVFSRTLHNDAASRVAPDTAPGSEAPGPGPNTGALQERSPGSPPGEWESQDTRALDNSTEDLDNSTLVQGNSVKELDQATLLDCAPPEPAVSPGHVGLEAAGGEL.

Disordered regions lie at residues 1–20 and 47–120; these read MDGD…MGPI and GHGE…KGPC. Over 1–317 the chain is Cytoplasmic; sequence MDGDLAIGKM…STSKSAQTGT (317 aa). Residues 71 to 85 show a composition bias toward polar residues; that stretch reads DSDSPTWSPAASDSG. One can recognise a bZIP domain in the interval 238 to 301; that stretch reads MLKKIRRKIR…LSLLEQLKKL (64 aa). Residues 240 to 269 form a basic motif region; the sequence is KKIRRKIRNKQSAQESRKKKKEYIDGLETR. The interval 280 to 301 is leucine-zipper; the sequence is LQRKVLHLEKQNLSLLEQLKKL. Lysine 289 participates in a covalent cross-link: Glycyl lysine isopeptide (Lys-Gly) (interchain with G-Cter in ubiquitin). A helical; Signal-anchor for type II membrane protein membrane pass occupies residues 318-338; it reads CIAVLLFSFALIVLPSISPFA. Topologically, residues 339 to 456 are lumenal; that stretch reads SNRAESPGDF…VGLEAAGGEL (118 aa). Disordered regions lie at residues 365–423 and 435–456; these read RVAP…QGNS and CAPP…GGEL. N-linked (GlcNAc...) asparagine glycosylation is found at asparagine 408 and asparagine 415.

This sequence belongs to the bZIP family. ATF subfamily. In terms of assembly, binds DNA as a dimer. May form homodimers. Interacts with ATF6. Interacts with SYNV1/HRD1; this interaction leads to CREB3L3 ubiquitination and proteasomal degradation. Controlled by regulated intramembrane proteolysis (RIP). Following ER stress a fragment containing the cytoplasmic transcription factor domain is released by proteolysis. The cleavage seems to be performed sequentially by site-1 and site-2 proteases (PS1 and PS2). Post-translationally, N-glycosylation is required for optimal proteolytic activation. In terms of processing, ubiquitinated at Lys-289 by SYNV1/HRD1 via 'Lys-27'-linked ubiquitin.

It is found in the endoplasmic reticulum membrane. It localises to the nucleus. Functionally, transcription factor that may act during endoplasmic reticulum stress by activating unfolded protein response target genes. Activated in response to cAMP stimulation. In vitro, binds the cAMP response element (CRE). Activates transcription through box-B element and CRE. Seems to function synergistically with ATF6. In acute inflammatory response, may activate expression of acute phase response (APR) genes. May be involved in growth suppression. Regulates FGF21 transcription. Plays a crucial role in the regulation of triglyceride metabolism and is required for the maintenance of normal plasma triglyceride concentrations. This is Cyclic AMP-responsive element-binding protein 3-like protein 3 (CREB3L3) from Bos taurus (Bovine).